The primary structure comprises 92 residues: Small ribosomal subunit protein uS19 (92 aa).

It belongs to the universal ribosomal protein uS19 family.

In terms of biological role, protein S19 forms a complex with S13 that binds strongly to the 16S ribosomal RNA. This chain is Small ribosomal subunit protein uS19, found in Pelobacter propionicus (strain DSM 2379 / NBRC 103807 / OttBd1).